The primary structure comprises 474 residues: Dihydrolipoyl dehydrogenase (474 aa).

FAD-binding positions include 36 to 45 (ERYNTLGGVC), K54, and G117. The cysteines at positions 45 and 50 are disulfide-linked. NAD(+)-binding positions include 182–186 (GGGII) and E205. Position 220 is an N6-acetyllysine (K220). NAD(+)-binding positions include V238 and 270–273 (AIGR). FAD is bound by residues D313 and A321. Catalysis depends on H445, which acts as the Proton acceptor.

Belongs to the class-I pyridine nucleotide-disulfide oxidoreductase family. In terms of assembly, homodimer. The cofactor is FAD.

Its subcellular location is the cytoplasm. It catalyses the reaction N(6)-[(R)-dihydrolipoyl]-L-lysyl-[protein] + NAD(+) = N(6)-[(R)-lipoyl]-L-lysyl-[protein] + NADH + H(+). Its function is as follows. Lipoamide dehydrogenase is a component of the glycine cleavage system as well as of the alpha-ketoacid dehydrogenase complexes. The sequence is that of Dihydrolipoyl dehydrogenase (lpdA) from Shigella flexneri.